We begin with the raw amino-acid sequence, 479 residues long: 5-hydroxytryptamine receptor 7 (479 aa).

The Extracellular portion of the chain corresponds to 1-83; that stretch reads MMDVNSSGRP…INYGRVEKVV (83 aa). 2 N-linked (GlcNAc...) asparagine glycosylation sites follow: N5 and N66. Residues 84 to 108 form a helical membrane-spanning segment; the sequence is IGSILTLITLLTIAGNCLVVISVCF. Residues 109–118 are Cytoplasmic-facing; the sequence is VKKLRQPSNY. The chain crosses the membrane as a helical span at residues 119–140; it reads LIVSLALADLSVAVAVMPFVSV. Residues 141–152 are Extracellular-facing; the sequence is TDLIGGKWIFGH. The helical transmembrane segment at 153–178 threads the bilayer; the sequence is FFCNVFIAMDVMCCTASIMTLCVISI. Cysteines 155 and 231 form a disulfide. D162 serves as a coordination point for serotonin. The Cytoplasmic portion of the chain corresponds to 179–198; it reads DRYLGITRPLTYPVRQNGKC. The chain crosses the membrane as a helical span at residues 199-219; sequence MAKMILSVWLLSASITLPPLF. Over 220–237 the chain is Extracellular; sequence GWAQNVNDDKVCLISQDF. A helical membrane pass occupies residues 238–260; sequence GYTIYSTAVAFYIPMSVMLFMYY. Topologically, residues 261-326 are cytoplasmic; the sequence is QIYKAARKSA…SIFKREQKAA (66 aa). The helical transmembrane segment at 327 to 352 threads the bilayer; sequence TTLGIIVGAFTVCWLPFFLLSTARPF. Residues 353–363 are Extracellular-facing; it reads ICGTSCSCIPL. Residues 364–387 form a helical membrane-spanning segment; the sequence is WVERTFLWLGYANSLINPFIYAFF. Residues 388-479 are Cytoplasmic-facing; that stretch reads NRDLRTTYRS…TVEKKVMIHD (92 aa). C401 carries the S-palmitoyl cysteine lipid modification.

The protein belongs to the G-protein coupled receptor 1 family. Predominant isoform in spleen, caudate and hippocampus. In terms of tissue distribution, expressed at lower levels. As to expression, minor isoform in terms of expression.

It localises to the cell membrane. Functionally, G-protein coupled receptor for 5-hydroxytryptamine (serotonin), a biogenic hormone that functions as a neurotransmitter, a hormone and a mitogen. Ligand binding causes a conformation change that triggers signaling via guanine nucleotide-binding proteins (G proteins) and modulates the activity of downstream effectors. HTR7 is coupled to G(s) G alpha proteins and mediates activation of adenylate cyclase activity. The polypeptide is 5-hydroxytryptamine receptor 7 (Homo sapiens (Human)).